Reading from the N-terminus, the 269-residue chain is Transcription factor MYB7 (269 aa).

HTH myb-type domains are found at residues 9–61 (KEHM…INYL) and 62–116 (RPDL…KRKL). DNA-binding regions (H-T-H motif) lie at residues 37-61 (WRSL…INYL) and 89-112 (WSLI…NTHI).

In terms of assembly, interacts with SAD2. In terms of tissue distribution, expressed in anthers. Expressed in pollen grains and mature seeds. Expressed in roots and vasculature of leaves.

It localises to the nucleus. In terms of biological role, transcription factor involved in the negative regulation of flavonol biosynthesis. Represses the early phenylpropanoid genes, phenylalanine ammonia-lyase (PAL), cinnamate 4-hydroxylase (C4H) and 4-coumarate-CoA ligase (4CL), as well as the flavonoid-specific genes, flavonoid 3'-hydroxylase (F3'H) and dihydroflavonol 4-reductase (DFR). Plays a role in seed germination inhibition. Negatively regulates the expression of the abscisic acid (ABA) signaling transcription factor ABI5 in seeds. In Arabidopsis thaliana (Mouse-ear cress), this protein is Transcription factor MYB7.